The primary structure comprises 368 residues: 3-dehydroquinate synthase (368 aa).

NAD(+) is bound by residues 71–76 (DGEAFK), 105–109 (GVVGD), 129–130 (TT), lysine 142, lysine 151, and 169–172 (TLRT). Residues glutamate 184, histidine 247, and histidine 264 each coordinate Zn(2+).

It belongs to the sugar phosphate cyclases superfamily. Dehydroquinate synthase family. Requires Co(2+) as cofactor. Zn(2+) is required as a cofactor. The cofactor is NAD(+).

Its subcellular location is the cytoplasm. It catalyses the reaction 7-phospho-2-dehydro-3-deoxy-D-arabino-heptonate = 3-dehydroquinate + phosphate. It participates in metabolic intermediate biosynthesis; chorismate biosynthesis; chorismate from D-erythrose 4-phosphate and phosphoenolpyruvate: step 2/7. Functionally, catalyzes the conversion of 3-deoxy-D-arabino-heptulosonate 7-phosphate (DAHP) to dehydroquinate (DHQ). The protein is 3-dehydroquinate synthase of Cupriavidus taiwanensis (strain DSM 17343 / BCRC 17206 / CCUG 44338 / CIP 107171 / LMG 19424 / R1) (Ralstonia taiwanensis (strain LMG 19424)).